Consider the following 437-residue polypeptide: MADDPSAADRNVEIWKIKKLIKSLEAARGNGTSMISLIIPPKDQISRVAKMLADEFGTASNIKSRVNRLSVLGAITSVQQRLKLYNKVPPNGLVVYCGTIVTEEGKEKKVNIDFEPFKPINTSLYLCDNKFHTEALTALLSDDSKFGFIVIDGSGALFGTLQGNTREVLHKFTVDLPKKHGRGGQSALRFARLRMEKRHNYVRKVAETAVQLFISGDKVNVAGLVLAGSADFKTELSQSDMFDQRLQSKVLKLVDISYGGENGFNQAIELSTEVLSNVKFIQEKKLIGRYFGEISQDTGKYCFGVEDTLKALEMGAVEILIVYENLDIMRYVLHCQGTEEEKILYLTPEQEKDKSHFTDKETGQEHELIESMPLLEWFANNYKKFGATLEIVTDKSQEGSQFVKGFGGIGGILRYRVDFQGMEYQGGDDEFFDLDDY.

Alanine 2 is modified (N-acetylalanine). Residues 61–64 (NIKS) carry the NIKS motif; plays an important role in translational termination motif. The residue at position 63 (lysine 63) is a 4-hydroxylysine. Lysine 87 is covalently cross-linked (Glycyl lysine isopeptide (Lys-Gly) (interchain with G-Cter in SUMO2)). Glutamine 185 bears the N5-methylglutamine mark. Threonine 347 bears the Phosphothreonine mark. Lysine 404 is covalently cross-linked (Glycyl lysine isopeptide (Lys-Gly) (interchain with G-Cter in SUMO2)).

Belongs to the eukaryotic release factor 1 family. Component of the eRF1-eRF3-GTP ternary complex, composed of ETF1/ERF1 and eRF3 (GSPT1/ERF3A or GSPT2/ERF3B) and GTP. Component of the transient SURF (SMG1-UPF1-eRF1-eRF3) complex. Interacts with JMJD4. The ETF1-GSPT1 complex interacts with JMJD4. In terms of processing, hydroxylation at Lys-63 by JMJD4 promotes its translational termination efficiency. Post-translationally, methylated at Gln-185 by N6AMT1. Ubiquitinated via 'Lys-6'-linked polyubiquitin chains by RNF14 and RNF25 in response to ribosome collisions (ribosome stalling), leading to its degradation by the proteasome and rescue of stalled ribosomes.

Its subcellular location is the cytoplasm. Component of the eRF1-eRF3-GTP ternary complex, a ternary complex that mediates translation termination in response to the termination codons. The eRF1-eRF3-GTP complex binds to a stop codon in the ribosomal A-site. ETF1/ERF1 is responsible for stop codon recognition and inducing hydrolysis of peptidyl-tRNA. Following GTP hydrolysis, eRF3 (GSPT1/ERF3A or GSPT2/ERF3B) dissociates, permitting ETF1/eRF1 to accommodate fully in the A-site, followed by hydrolysis of peptidyl-tRNA. Component of the transient SURF complex which recruits UPF1 to stalled ribosomes in the context of nonsense-mediated decay (NMD) of mRNAs containing premature stop codons. Required for SHFL-mediated translation termination which inhibits programmed ribosomal frameshifting (-1PRF) of mRNA from viruses and cellular genes. The polypeptide is Eukaryotic peptide chain release factor subunit 1 (ETF1) (Pongo abelii (Sumatran orangutan)).